A 105-amino-acid chain; its full sequence is Flagellar transcriptional regulator FlhD (105 aa).

Belongs to the FlhD family. Homodimer; disulfide-linked. Forms a heterohexamer composed of two FlhC and four FlhD subunits. Each FlhC binds a FlhD dimer, forming a heterotrimer, and a hexamer assembles by dimerization of two heterotrimers.

The protein localises to the cytoplasm. In terms of biological role, functions in complex with FlhC as a master transcriptional regulator that regulates transcription of several flagellar and non-flagellar operons by binding to their promoter region. Activates expression of class 2 flagellar genes, including fliA, which is a flagellum-specific sigma factor that turns on the class 3 genes. Also regulates genes whose products function in a variety of physiological pathways. The protein is Flagellar transcriptional regulator FlhD of Nitrosomonas europaea (strain ATCC 19718 / CIP 103999 / KCTC 2705 / NBRC 14298).